A 129-amino-acid polypeptide reads, in one-letter code: uncharacterized protein (129 aa).

2 disordered regions span residues 1–57 (MGGG…LPNH) and 87–129 (PVSS…WLWW). Residues 10-20 (SGEERREKRSG) show a composition bias toward basic and acidic residues. Positions 87-99 (PVSSSPSRSPSSS) are enriched in low complexity.

This is an uncharacterized protein from Homo sapiens (Human).